Consider the following 536-residue polypeptide: Chaperonin GroEL (536 aa).

Residues 29–32 (TLGP), 86–90 (DGTTT), Gly413, 476–478 (DAA), and Asp492 contribute to the ATP site.

The protein belongs to the chaperonin (HSP60) family. In terms of assembly, forms a cylinder of 14 subunits composed of two heptameric rings stacked back-to-back. Interacts with the co-chaperonin GroES.

The protein resides in the cytoplasm. The enzyme catalyses ATP + H2O + a folded polypeptide = ADP + phosphate + an unfolded polypeptide.. In terms of biological role, together with its co-chaperonin GroES, plays an essential role in assisting protein folding. The GroEL-GroES system forms a nano-cage that allows encapsulation of the non-native substrate proteins and provides a physical environment optimized to promote and accelerate protein folding. The polypeptide is Chaperonin GroEL (Methanococcus vannielii (strain ATCC 35089 / DSM 1224 / JCM 13029 / OCM 148 / SB)).